Here is a 160-residue protein sequence, read N- to C-terminus: Nucleotide-binding protein PSHAa2277 (160 aa).

This sequence belongs to the YajQ family.

Nucleotide-binding protein. In Pseudoalteromonas translucida (strain TAC 125), this protein is Nucleotide-binding protein PSHAa2277.